The chain runs to 262 residues: Tropinone reductase homolog At2g30670 (262 aa).

NADP(+) is bound at residue 13-37 (LVTGGASGIGHAIVEELAGLGARIY). Ser146 is a binding site for substrate. Residue Tyr159 is the Proton acceptor of the active site.

It belongs to the short-chain dehydrogenases/reductases (SDR) family. SDR65C subfamily.

In Arabidopsis thaliana (Mouse-ear cress), this protein is Tropinone reductase homolog At2g30670.